An 84-amino-acid polypeptide reads, in one-letter code: ATP synthase subunit c (84 aa).

The next 2 membrane-spanning stretches (helical) occupy residues 10-30 (IAVAIMIGLAALGTAIGFAIL) and 53-73 (FIVAGLLDAISMIAVGVALFF).

This sequence belongs to the ATPase C chain family. F-type ATPases have 2 components, F(1) - the catalytic core - and F(0) - the membrane proton channel. F(1) has five subunits: alpha(3), beta(3), gamma(1), delta(1), epsilon(1). F(0) has three main subunits: a(1), b(2) and c(10-14). The alpha and beta chains form an alternating ring which encloses part of the gamma chain. F(1) is attached to F(0) by a central stalk formed by the gamma and epsilon chains, while a peripheral stalk is formed by the delta and b chains.

It localises to the cell inner membrane. F(1)F(0) ATP synthase produces ATP from ADP in the presence of a proton or sodium gradient. F-type ATPases consist of two structural domains, F(1) containing the extramembraneous catalytic core and F(0) containing the membrane proton channel, linked together by a central stalk and a peripheral stalk. During catalysis, ATP synthesis in the catalytic domain of F(1) is coupled via a rotary mechanism of the central stalk subunits to proton translocation. Functionally, key component of the F(0) channel; it plays a direct role in translocation across the membrane. A homomeric c-ring of between 10-14 subunits forms the central stalk rotor element with the F(1) delta and epsilon subunits. In Shewanella putrefaciens (strain CN-32 / ATCC BAA-453), this protein is ATP synthase subunit c.